Consider the following 347-residue polypeptide: Probable G-protein coupled receptor 148 (347 aa).

Over M1 to W51 the chain is Extracellular. N-linked (GlcNAc...) asparagine glycosylation is present at N34. The helical transmembrane segment at L52 to V72 threads the bilayer. Over T73–H85 the chain is Cytoplasmic. The helical transmembrane segment at Y86–I106 threads the bilayer. Residues S107 to A130 are Extracellular-facing. A helical membrane pass occupies residues A131–I151. Over H152–A165 the chain is Cytoplasmic. The chain crosses the membrane as a helical span at residues W166–L186. Over S187–G214 the chain is Extracellular. The chain crosses the membrane as a helical span at residues L215–I235. Over A236–G261 the chain is Cytoplasmic. The chain crosses the membrane as a helical span at residues T262–L282. Residues D283–W299 are Extracellular-facing. A helical transmembrane segment spans residues L300–L322. Residues R323 to S347 lie on the Cytoplasmic side of the membrane.

The protein belongs to the G-protein coupled receptor 1 family. In terms of tissue distribution, expression restricted to nervous system and testis. Is also detected in several tumors types, most notably prostate cancer.

The protein localises to the cell membrane. Orphan receptor. This chain is Probable G-protein coupled receptor 148 (GPR148), found in Homo sapiens (Human).